Consider the following 253-residue polypeptide: MGRKFFVGGNWKCNGTTDQVDKIVKILNEGQIASTDVVEVVVSPPYVFLPVVKSQLRPEIQVAAQNCWVKKGGAFTGEVSAEMLVNLSIPWVILGHSERRSLLGESNEFVGDKVAYALSQGLKVIACVGETLEQRESGSTMDVVAAQTKAISERIKDWTNVVVAYEPVWAIGTGKVATPDQAQEVHDGLRKWLAANVSAEVAESTRIIYGGSVTGANCKELAAKPDVDGFLVGGASLKPEFIDIINSATVKSA.

Substrate is bound by residues asparagine 10 and lysine 12. Residue histidine 96 is the Electrophile of the active site. Residue glutamate 166 is the Proton acceptor of the active site.

Belongs to the triosephosphate isomerase family. As to quaternary structure, homodimer.

It is found in the cytoplasm. It catalyses the reaction D-glyceraldehyde 3-phosphate = dihydroxyacetone phosphate. Its pathway is carbohydrate biosynthesis; gluconeogenesis. The protein operates within carbohydrate degradation; glycolysis; D-glyceraldehyde 3-phosphate from glycerone phosphate: step 1/1. This Oryza sativa subsp. japonica (Rice) protein is Triosephosphate isomerase, cytosolic (TPI).